The following is a 465-amino-acid chain: Putative F-box protein At1g21990 (465 aa).

Positions 8–54 constitute an F-box domain; sequence RDLISGSPDEILGKILSFLPTHHAATTSVLSKRWRNLLPLVDKLELT.

This is Putative F-box protein At1g21990 from Arabidopsis thaliana (Mouse-ear cress).